The chain runs to 490 residues: Betaine aldehyde dehydrogenase (490 aa).

K(+)-binding residues include T26, I27, and D93. An NAD(+)-binding site is contributed by 150-152; the sequence is GAW. The Charge relay system role is filled by K162. NAD(+) is bound at residue 176 to 179; that stretch reads KPSE. V180 is a binding site for K(+). An NAD(+)-binding site is contributed by 230–233; the sequence is GVAS. A K(+)-binding site is contributed by L246. The Proton acceptor role is filled by E252. Residues G254, C286, and E387 each coordinate NAD(+). C286 functions as the Nucleophile in the catalytic mechanism. Position 286 is a cysteine sulfenic acid (-SOH) (C286). K(+) is bound by residues K457 and G460. E464 functions as the Charge relay system in the catalytic mechanism.

Belongs to the aldehyde dehydrogenase family. Dimer of dimers. K(+) is required as a cofactor.

It catalyses the reaction betaine aldehyde + NAD(+) + H2O = glycine betaine + NADH + 2 H(+). It participates in amine and polyamine biosynthesis; betaine biosynthesis via choline pathway; betaine from betaine aldehyde: step 1/1. Its function is as follows. Involved in the biosynthesis of the osmoprotectant glycine betaine. Catalyzes the irreversible oxidation of betaine aldehyde to the corresponding acid. In Escherichia coli O139:H28 (strain E24377A / ETEC), this protein is Betaine aldehyde dehydrogenase.